Here is a 423-residue protein sequence, read N- to C-terminus: Subtilisin-like protease 2 (423 aa).

An N-terminal signal peptide occupies residues 1-17 (MQLLNLGLLLLLPFVAG). Residues 18-123 (EIAPQPEPLR…VHPDQHVYLA (106 aa)) constitute a propeptide that is removed on maturation. Residues 37–123 (QYIVTLKEGL…VHPDQHVYLA (87 aa)) enclose the Inhibitor I9 domain. The Peptidase S8 domain occupies 132–423 (RWGLGYMSSK…RKFTLPKNTK (292 aa)). Active-site charge relay system residues include aspartate 170 and histidine 202. Asparagine 249, asparagine 262, and asparagine 349 each carry an N-linked (GlcNAc...) asparagine glycan. The active-site Charge relay system is serine 358. The N-linked (GlcNAc...) asparagine glycan is linked to asparagine 389.

It belongs to the peptidase S8 family.

Its subcellular location is the secreted. Its function is as follows. Secreted subtilisin-like serine protease with keratinolytic activity that contributes to pathogenicity. In Arthroderma otae (strain ATCC MYA-4605 / CBS 113480) (Microsporum canis), this protein is Subtilisin-like protease 2 (SUB2).